The sequence spans 536 residues: Cytochrome P450 78A7 (536 aa).

A helical transmembrane segment spans residues 36 to 56 (LFLAVVFLSIVTWALAGGGGV). Cysteine 481 contributes to the heme binding site.

The protein belongs to the cytochrome P450 family. Requires heme as cofactor.

Its subcellular location is the membrane. In terms of biological role, functions probably in association with CYP78A5 in regulating relative growth of the shoot apical meristem and plant organs via a non-cell-autonomous signal. This chain is Cytochrome P450 78A7 (CYP78A7), found in Arabidopsis thaliana (Mouse-ear cress).